The following is a 302-amino-acid chain: 33 kDa chaperonin (302 aa).

Disulfide bonds link Cys-247-Cys-249 and Cys-280-Cys-283.

It belongs to the HSP33 family. Post-translationally, under oxidizing conditions two disulfide bonds are formed involving the reactive cysteines. Under reducing conditions zinc is bound to the reactive cysteines and the protein is inactive.

The protein localises to the cytoplasm. Redox regulated molecular chaperone. Protects both thermally unfolding and oxidatively damaged proteins from irreversible aggregation. Plays an important role in the bacterial defense system toward oxidative stress. This chain is 33 kDa chaperonin, found in Prochlorococcus marinus (strain MIT 9301).